The sequence spans 293 residues: 4-hydroxy-tetrahydrodipicolinate synthase (293 aa).

A pyruvate-binding site is contributed by Thr46. Tyr133 serves as the catalytic Proton donor/acceptor. Lys161 (schiff-base intermediate with substrate) is an active-site residue. Val202 contributes to the pyruvate binding site.

The protein belongs to the DapA family. As to quaternary structure, homotetramer; dimer of dimers.

It is found in the cytoplasm. It carries out the reaction L-aspartate 4-semialdehyde + pyruvate = (2S,4S)-4-hydroxy-2,3,4,5-tetrahydrodipicolinate + H2O + H(+). The protein operates within amino-acid biosynthesis; L-lysine biosynthesis via DAP pathway; (S)-tetrahydrodipicolinate from L-aspartate: step 3/4. Its function is as follows. Catalyzes the condensation of (S)-aspartate-beta-semialdehyde [(S)-ASA] and pyruvate to 4-hydroxy-tetrahydrodipicolinate (HTPA). This chain is 4-hydroxy-tetrahydrodipicolinate synthase, found in Wolbachia pipientis wMel.